Here is a 272-residue protein sequence, read N- to C-terminus: Acidic leucine-rich nuclear phosphoprotein 32-related protein 2 (272 aa).

3 LRR repeats span residues 57–78, 79–100, and 106–127; these read SLEE…PRLP, ALRR…AAVA, and TLRH…APLA. Residues 139–184 enclose the LRRCT domain; sequence CPVTKAKGYRDKVFALIPSLKFLDGMDAEGNDCLDSDDEEDEEEDE. The segment at 163–272 is disordered; that stretch reads GMDAEGNDCL…DSEDDANGDN (110 aa). Over residues 164–241 the composition is skewed to acidic residues; it reads MDAEGNDCLD…DEAGADEEDE (78 aa). Positions 248–257 are enriched in polar residues; that stretch reads SKGSSGSAQP.

This sequence belongs to the ANP32 family.

This Oryza sativa subsp. japonica (Rice) protein is Acidic leucine-rich nuclear phosphoprotein 32-related protein 2.